The primary structure comprises 457 residues: Bifunctional protein GlmU (457 aa).

The interval 1–230 (MSKRYAVVLA…FEESLGVNDR (230 aa)) is pyrophosphorylase. UDP-N-acetyl-alpha-D-glucosamine-binding positions include 9-12 (LAAG), Lys-23, Gln-73, and 78-79 (GT). Asp-103 provides a ligand contact to Mg(2+). Gly-140, Glu-155, Asn-170, and Asn-228 together coordinate UDP-N-acetyl-alpha-D-glucosamine. Asn-228 is a Mg(2+) binding site. A linker region spans residues 231-251 (IALAEASKLMQRRINENHMRN). Positions 252–457 (GVTLVNPEST…GYAKHLNHGK (206 aa)) are N-acetyltransferase. Arg-333 and Lys-351 together coordinate UDP-N-acetyl-alpha-D-glucosamine. His-363 (proton acceptor) is an active-site residue. 2 residues coordinate UDP-N-acetyl-alpha-D-glucosamine: Tyr-366 and Asn-377. Acetyl-CoA is bound by residues 386–387 (NY), Ala-423, and Arg-440.

In the N-terminal section; belongs to the N-acetylglucosamine-1-phosphate uridyltransferase family. It in the C-terminal section; belongs to the transferase hexapeptide repeat family. In terms of assembly, homotrimer. It depends on Mg(2+) as a cofactor.

The protein localises to the cytoplasm. It carries out the reaction alpha-D-glucosamine 1-phosphate + acetyl-CoA = N-acetyl-alpha-D-glucosamine 1-phosphate + CoA + H(+). It catalyses the reaction N-acetyl-alpha-D-glucosamine 1-phosphate + UTP + H(+) = UDP-N-acetyl-alpha-D-glucosamine + diphosphate. The protein operates within nucleotide-sugar biosynthesis; UDP-N-acetyl-alpha-D-glucosamine biosynthesis; N-acetyl-alpha-D-glucosamine 1-phosphate from alpha-D-glucosamine 6-phosphate (route II): step 2/2. It functions in the pathway nucleotide-sugar biosynthesis; UDP-N-acetyl-alpha-D-glucosamine biosynthesis; UDP-N-acetyl-alpha-D-glucosamine from N-acetyl-alpha-D-glucosamine 1-phosphate: step 1/1. It participates in bacterial outer membrane biogenesis; LPS lipid A biosynthesis. In terms of biological role, catalyzes the last two sequential reactions in the de novo biosynthetic pathway for UDP-N-acetylglucosamine (UDP-GlcNAc). The C-terminal domain catalyzes the transfer of acetyl group from acetyl coenzyme A to glucosamine-1-phosphate (GlcN-1-P) to produce N-acetylglucosamine-1-phosphate (GlcNAc-1-P), which is converted into UDP-GlcNAc by the transfer of uridine 5-monophosphate (from uridine 5-triphosphate), a reaction catalyzed by the N-terminal domain. This is Bifunctional protein GlmU from Listeria monocytogenes serotype 4a (strain HCC23).